The primary structure comprises 159 residues: Cyclic pyranopterin monophosphate synthase (159 aa).

Substrate is bound by residues 75–77 and 113–114; these read LCH and ME. The active site involves D128.

Belongs to the MoaC family. As to quaternary structure, homohexamer; trimer of dimers.

The enzyme catalyses (8S)-3',8-cyclo-7,8-dihydroguanosine 5'-triphosphate = cyclic pyranopterin phosphate + diphosphate. The protein operates within cofactor biosynthesis; molybdopterin biosynthesis. Catalyzes the conversion of (8S)-3',8-cyclo-7,8-dihydroguanosine 5'-triphosphate to cyclic pyranopterin monophosphate (cPMP). In Serratia proteamaculans (strain 568), this protein is Cyclic pyranopterin monophosphate synthase.